We begin with the raw amino-acid sequence, 199 residues long: Transgelin-3 (199 aa).

The Calponin-homology (CH) domain maps to 24–136; the sequence is ADLENKLVDW…RTLMALGSVA (113 aa). The residue at position 163 (serine 163) is a Phosphoserine. The Calponin-like repeat unit spans residues 174-199; sequence IGLQMGSNKGASQAGMTGYGMPRQIM. Positions 178-188 are enriched in polar residues; it reads MGSNKGASQAG. Residues 178–199 form a disordered region; that stretch reads MGSNKGASQAGMTGYGMPRQIM.

The protein belongs to the calponin family. As to expression, abundant and ubiquitous expression in neurons.

This is Transgelin-3 (Tagln3) from Rattus norvegicus (Rat).